Here is a 341-residue protein sequence, read N- to C-terminus: Glycerol-3-phosphate dehydrogenase [NAD(P)+] (341 aa).

Residues Ser-15, Trp-16, Arg-36, and Lys-110 each contribute to the NADPH site. The sn-glycerol 3-phosphate site is built by Lys-110, Gly-139, and Ser-141. Residue Ala-143 coordinates NADPH. The sn-glycerol 3-phosphate site is built by Lys-194, Asp-247, Ser-257, Arg-258, and Asn-259. Lys-194 (proton acceptor) is an active-site residue. Arg-258 contributes to the NADPH binding site. Residues Val-282 and Glu-284 each contribute to the NADPH site.

It belongs to the NAD-dependent glycerol-3-phosphate dehydrogenase family.

It localises to the cytoplasm. It carries out the reaction sn-glycerol 3-phosphate + NAD(+) = dihydroxyacetone phosphate + NADH + H(+). The catalysed reaction is sn-glycerol 3-phosphate + NADP(+) = dihydroxyacetone phosphate + NADPH + H(+). It participates in membrane lipid metabolism; glycerophospholipid metabolism. Its function is as follows. Catalyzes the reduction of the glycolytic intermediate dihydroxyacetone phosphate (DHAP) to sn-glycerol 3-phosphate (G3P), the key precursor for phospholipid synthesis. This Xanthomonas oryzae pv. oryzae (strain MAFF 311018) protein is Glycerol-3-phosphate dehydrogenase [NAD(P)+].